The following is a 388-amino-acid chain: Riboflavin biosynthesis protein RibBA (388 aa).

The DHBP synthase stretch occupies residues 1-186 (MEELREAFEE…MDDVWREFVK (186 aa)). D-ribulose 5-phosphate is bound by residues 21-22 (RE), aspartate 26, 125-129 (RKGHT), and glutamate 149. Glutamate 22 lines the Mg(2+) pocket. Position 128 (histidine 128) interacts with Mg(2+). The interval 187–388 (RKLLMKKKAE…LEEIFREVNS (202 aa)) is GTP cyclohydrolase II. A GTP-binding site is contributed by 235 to 239 (RIHSE). Residues cysteine 240, cysteine 251, and cysteine 253 each coordinate Zn(2+). Residues glutamine 256, 277–279 (EGR), and threonine 299 contribute to the GTP site. Catalysis depends on aspartate 311, which acts as the Proton acceptor; for GTP cyclohydrolase activity. The active-site Nucleophile; for GTP cyclohydrolase activity is the arginine 313. Threonine 334 and lysine 339 together coordinate GTP.

It in the N-terminal section; belongs to the DHBP synthase family. In the C-terminal section; belongs to the GTP cyclohydrolase II family. The cofactor is Mg(2+). It depends on Mn(2+) as a cofactor. Requires Zn(2+) as cofactor.

The catalysed reaction is D-ribulose 5-phosphate = (2S)-2-hydroxy-3-oxobutyl phosphate + formate + H(+). It catalyses the reaction GTP + 4 H2O = 2,5-diamino-6-hydroxy-4-(5-phosphoribosylamino)-pyrimidine + formate + 2 phosphate + 3 H(+). Its pathway is cofactor biosynthesis; riboflavin biosynthesis; 2-hydroxy-3-oxobutyl phosphate from D-ribulose 5-phosphate: step 1/1. The protein operates within cofactor biosynthesis; riboflavin biosynthesis; 5-amino-6-(D-ribitylamino)uracil from GTP: step 1/4. Functionally, catalyzes the conversion of D-ribulose 5-phosphate to formate and 3,4-dihydroxy-2-butanone 4-phosphate. Its function is as follows. Catalyzes the conversion of GTP to 2,5-diamino-6-ribosylamino-4(3H)-pyrimidinone 5'-phosphate (DARP), formate and pyrophosphate. The sequence is that of Riboflavin biosynthesis protein RibBA from Thermotoga maritima (strain ATCC 43589 / DSM 3109 / JCM 10099 / NBRC 100826 / MSB8).